Reading from the N-terminus, the 207-residue chain is Guanylate kinase (207 aa).

The Guanylate kinase-like domain occupies 4–184 (NMYYAISAPS…TLNKIKTIII (181 aa)). 11–18 (APSGTGKS) is a binding site for ATP.

Belongs to the guanylate kinase family.

Its subcellular location is the cytoplasm. It catalyses the reaction GMP + ATP = GDP + ADP. Its function is as follows. Essential for recycling GMP and indirectly, cGMP. The protein is Guanylate kinase of Wigglesworthia glossinidia brevipalpis.